Consider the following 121-residue polypeptide: Large ribosomal subunit protein uL18 (121 aa).

This sequence belongs to the universal ribosomal protein uL18 family. In terms of assembly, part of the 50S ribosomal subunit; part of the 5S rRNA/L5/L18/L25 subcomplex. Contacts the 5S and 23S rRNAs.

Functionally, this is one of the proteins that bind and probably mediate the attachment of the 5S RNA into the large ribosomal subunit, where it forms part of the central protuberance. In Delftia acidovorans (strain DSM 14801 / SPH-1), this protein is Large ribosomal subunit protein uL18.